Here is a 997-residue protein sequence, read N- to C-terminus: Mannuronan C5-epimerase AlgE2 (997 aa).

PbH1 repeat units follow at residues 133 to 155 (DRDV…DPHE), 157 to 179 (TINL…VADF), 180 to 202 (QIGG…NIVT), 204 to 226 (TNDF…VVQR), 257 to 279 (AHDV…RVYG), 280 to 315 (AEDV…GVSG), and 320 to 359 (TTGT…SVSN). 10 Hemolysin-type calcium-binding repeats span residues 388–403 (GTAG…AHET), 406–422 (GLDG…NDIL), 424–439 (GGAG…GADL), 557–573 (GHAG…DDIL), 574–591 (VGGA…ADVF), 696–711 (GSAG…ADEV), 713–730 (HGGG…ADVF), 828–839 (GGDGNDTLSGSS), 846–862 (GGVG…NDIL), and 864–880 (GGAG…SDIF).

Belongs to the D-mannuronate C5-epimerase family. Ca(2+) is required as a cofactor.

The protein localises to the secreted. The catalysed reaction is [(1-&gt;4)-beta-D-mannuronosyl](n) = [alginate](n). The protein operates within glycan biosynthesis; alginate biosynthesis. Its activity is regulated as follows. Inhibited by zinc. Functionally, converts beta-D-mannuronic acid (M) to alpha-L-guluronic acid (G), producing a polymer with gel-forming capacity, required for the formation of the cyst coat. This chain is Mannuronan C5-epimerase AlgE2, found in Azotobacter vinelandii.